Consider the following 1047-residue polypeptide: Isoleucine--tRNA ligase (1047 aa).

The 'HIGH' region signature appears at 52–62; sequence PTANGMPGAHH. The short motif at 600-604 is the 'KMSKS' region element; that stretch reads KMSKH. Lys-603 contributes to the ATP binding site.

This sequence belongs to the class-I aminoacyl-tRNA synthetase family. IleS type 2 subfamily. In terms of assembly, monomer. The cofactor is Zn(2+).

Its subcellular location is the cytoplasm. It catalyses the reaction tRNA(Ile) + L-isoleucine + ATP = L-isoleucyl-tRNA(Ile) + AMP + diphosphate. Functionally, catalyzes the attachment of isoleucine to tRNA(Ile). As IleRS can inadvertently accommodate and process structurally similar amino acids such as valine, to avoid such errors it has two additional distinct tRNA(Ile)-dependent editing activities. One activity is designated as 'pretransfer' editing and involves the hydrolysis of activated Val-AMP. The other activity is designated 'posttransfer' editing and involves deacylation of mischarged Val-tRNA(Ile). The chain is Isoleucine--tRNA ligase from Streptomyces avermitilis (strain ATCC 31267 / DSM 46492 / JCM 5070 / NBRC 14893 / NCIMB 12804 / NRRL 8165 / MA-4680).